We begin with the raw amino-acid sequence, 192 residues long: UPF0312 protein ECA1782 (192 aa).

Positions Met1 to Ala23 are cleaved as a signal peptide.

The protein belongs to the UPF0312 family. Type 1 subfamily.

Its subcellular location is the periplasm. This chain is UPF0312 protein ECA1782, found in Pectobacterium atrosepticum (strain SCRI 1043 / ATCC BAA-672) (Erwinia carotovora subsp. atroseptica).